A 272-amino-acid chain; its full sequence is Formamidopyrimidine-DNA glycosylase (272 aa).

Proline 2 functions as the Schiff-base intermediate with DNA in the catalytic mechanism. Glutamate 3 (proton donor) is an active-site residue. Residue lysine 58 is the Proton donor; for beta-elimination activity of the active site. The DNA site is built by histidine 92, arginine 111, and arginine 153. Residues 238–272 (AVYGRQGQSCPRCGGLVERCRLGQRSTFFCPACQR) form an FPG-type zinc finger. Arginine 262 acts as the Proton donor; for delta-elimination activity in catalysis.

This sequence belongs to the FPG family. As to quaternary structure, monomer. The cofactor is Zn(2+).

It carries out the reaction Hydrolysis of DNA containing ring-opened 7-methylguanine residues, releasing 2,6-diamino-4-hydroxy-5-(N-methyl)formamidopyrimidine.. The catalysed reaction is 2'-deoxyribonucleotide-(2'-deoxyribose 5'-phosphate)-2'-deoxyribonucleotide-DNA = a 3'-end 2'-deoxyribonucleotide-(2,3-dehydro-2,3-deoxyribose 5'-phosphate)-DNA + a 5'-end 5'-phospho-2'-deoxyribonucleoside-DNA + H(+). Involved in base excision repair of DNA damaged by oxidation or by mutagenic agents. Acts as a DNA glycosylase that recognizes and removes damaged bases. Has a preference for oxidized purines, such as 7,8-dihydro-8-oxoguanine (8-oxoG). Has AP (apurinic/apyrimidinic) lyase activity and introduces nicks in the DNA strand. Cleaves the DNA backbone by beta-delta elimination to generate a single-strand break at the site of the removed base with both 3'- and 5'-phosphates. The polypeptide is Formamidopyrimidine-DNA glycosylase (Laribacter hongkongensis (strain HLHK9)).